A 76-amino-acid polypeptide reads, in one-letter code: Sea anemone sodium channel inhibitor type I (76 aa).

Residues 1–19 (MNRMLIIFVVVTVFGLASG) form the signal peptide. Positions 20–30 (LGPNMPAPDLA) are excised as a propeptide. Cystine bridges form between cysteine 37–cysteine 72, cysteine 39–cysteine 60, and cysteine 53–cysteine 73.

The protein belongs to the sea anemone sodium channel inhibitory toxin family. Type I subfamily. In terms of tissue distribution, expressed in acontia, a specialised envenomation structure laden with batteries of venom-containing nematocysts found only in the superfamily Metridioidea.

The protein resides in the secreted. It is found in the nematocyst. Its function is as follows. May affect sodium channels (Nav). The polypeptide is Sea anemone sodium channel inhibitor type I (Calliactis polypus (Hermit crab anemone)).